A 260-amino-acid polypeptide reads, in one-letter code: MNAFDSQAEDSPTSLGRSLRRRPLARKKLSEMVEEELEQMIRRHEFGEGEQLPSERELMAFFNVGRPSVREALAALKRKGLVQINNGERARVSRPSADTIISELSGMAKDFLTHPGGIAHFEQLRLFFESSLVRYAAEHATDEQIALLAKALEINSQSLDDNALFIRSDVEFHRVLAEIPGNPIFMAIHVALLDWLIAARPSVPDRELHEHNNVSYQQHIVIVDAIRQRDPDKADRALQTHLNSVSATWHALGKKSQKMR.

The disordered stretch occupies residues 1–22; the sequence is MNAFDSQAEDSPTSLGRSLRRR. An HTH gntR-type domain is found at 27 to 95; that stretch reads KKLSEMVEEE…NGERARVSRP (69 aa). A DNA-binding region (H-T-H motif) is located at residues 55–74; it reads ERELMAFFNVGRPSVREALA.

Belongs to the NanR family.

Functionally, transcriptional repressor that controls expression of the genes required for the catabolism of sialic acids. In Salmonella newport (strain SL254), this protein is HTH-type transcriptional repressor NanR.